The primary structure comprises 99 residues: uncharacterized protein (99 aa).

Residues 10-29 (ELSVHTGTVTHTIFVYVFLG) traverse the membrane as a helical segment.

The protein resides in the membrane. This is an uncharacterized protein from Schizosaccharomyces pombe (strain 972 / ATCC 24843) (Fission yeast).